The primary structure comprises 134 residues: MFSASCSVTVVVLLITVRRTNGASVTQTEGPVILSEGSSLTLNCNYQTSYSGFLFWYVQYLHEGPQLLLQSTTENQRMEHQGFHATFVKKDSSFHLHKSSLQLSDSAVYYCALRRGASNKLTLGTGTLLKVELN.

The N-terminal stretch at 1-20 (MFSASCSVTVVVLLITVRRT) is a signal peptide. The segment at 21-114 (NGASVTQTEG…DSAVYYCALR (94 aa)) is v segment. A j segment region spans residues 115–134 (RGASNKLTLGTGTLLKVELN). N134 carries an N-linked (GlcNAc...) asparagine glycan.

In terms of processing, rearrangement with the C region would elongate the sequence with Ile-Thr-; which creates a potential N-glycosylation site at Asn-134.

This Oryctolagus cuniculus (Rabbit) protein is T-cell receptor alpha chain V region RL-5.